Consider the following 276-residue polypeptide: Formamidopyrimidine-DNA glycosylase (276 aa).

The Schiff-base intermediate with DNA role is filled by Pro2. Catalysis depends on Glu3, which acts as the Proton donor. Lys60 (proton donor; for beta-elimination activity) is an active-site residue. Positions 93, 112, and 155 each coordinate DNA. An FPG-type zinc finger spans residues 240-274 (LVYGRKDEACTKCGAEIIRFVVGGRGTHICPDCQK). Arg264 (proton donor; for delta-elimination activity) is an active-site residue.

This sequence belongs to the FPG family. In terms of assembly, monomer. Zn(2+) is required as a cofactor.

It carries out the reaction Hydrolysis of DNA containing ring-opened 7-methylguanine residues, releasing 2,6-diamino-4-hydroxy-5-(N-methyl)formamidopyrimidine.. The enzyme catalyses 2'-deoxyribonucleotide-(2'-deoxyribose 5'-phosphate)-2'-deoxyribonucleotide-DNA = a 3'-end 2'-deoxyribonucleotide-(2,3-dehydro-2,3-deoxyribose 5'-phosphate)-DNA + a 5'-end 5'-phospho-2'-deoxyribonucleoside-DNA + H(+). Functionally, involved in base excision repair of DNA damaged by oxidation or by mutagenic agents. Acts as a DNA glycosylase that recognizes and removes damaged bases. Has a preference for oxidized purines, such as 7,8-dihydro-8-oxoguanine (8-oxoG). Has AP (apurinic/apyrimidinic) lyase activity and introduces nicks in the DNA strand. Cleaves the DNA backbone by beta-delta elimination to generate a single-strand break at the site of the removed base with both 3'- and 5'-phosphates. The chain is Formamidopyrimidine-DNA glycosylase from Brevibacillus brevis (strain 47 / JCM 6285 / NBRC 100599).